The following is a 239-amino-acid chain: Adenylate kinase 2 (239 aa).

An ATP-binding site is contributed by 29–34; the sequence is GSGKGT. Residues 49 to 78 form an NMP region; the sequence is STGDILRAIIASGSELGQKVQKITESGGLV. Residues Thr50, Arg55, 76 to 78, 104 to 107, and Gln111 each bind AMP; these read GLV and GFPR. Residues 145 to 182 form an LID region; it reads GRLFHLASGRSYHELFNPPKVPMVDDITGDRLVHRSDD. ATP is bound by residues Arg146 and 155–156; that span reads SY. Arg179 and Arg190 together coordinate AMP.

This sequence belongs to the adenylate kinase family. AK2 subfamily. In terms of assembly, monomer. Mg(2+) is required as a cofactor.

It localises to the cytoplasm. The protein resides in the cytosol. The enzyme catalyses AMP + ATP = 2 ADP. Its pathway is purine metabolism; purine nucleotide biosynthesis. Its function is as follows. Catalyzes the reversible transfer of the terminal phosphate group between ATP and AMP. Plays an important role in cellular energy homeostasis and in adenine nucleotide metabolism. This is Adenylate kinase 2 from Schistosoma mansoni (Blood fluke).